The following is a 403-amino-acid chain: MKKFNKVILAYSGGLDTSIIIPWLKENYGCEVIAVVGNVGQSDELVGLKEKAIKTGASKIYIEDLTKEFVEDYIFPTIQAGAKYEGKYLLGTSFARPIIAKRLVEIAKLEGADAICHGCTGKGNDQVRFELAIKTFNPEMQIIAPWRTWEIKSREEEIQYAIDNEVPINITYETNYSKDKNLWHLSHEGLDLEFPENEPKYDKILELCNTLEKAPNEAEYITLGFEKGIATSLNGEKLDGVTLLQELNKIGGKHGIGVIDMVENRLVGMKSRGVYETPGGSILYKAHKDLEELCLDKETSHYKEIVSLKFADLVYNGQWFTPLREALSAFISKTQETVTGEIKLKLYKGNIINAGMTSPYSLYSEEYATFGEDGIYDQKDAEGFINLFSLPSIVQAKMAQKLN.

ATP is bound at residue 10 to 18 (AYSGGLDTS). The L-citrulline site is built by Y88 and S93. G118 is an ATP binding site. Residues T120, N124, and D125 each contribute to the L-aspartate site. N124 is an L-citrulline binding site. Residues R128, S177, S186, E263, and Y275 each contribute to the L-citrulline site.

Belongs to the argininosuccinate synthase family. Type 1 subfamily. In terms of assembly, homotetramer.

It is found in the cytoplasm. The catalysed reaction is L-citrulline + L-aspartate + ATP = 2-(N(omega)-L-arginino)succinate + AMP + diphosphate + H(+). The protein operates within amino-acid biosynthesis; L-arginine biosynthesis; L-arginine from L-ornithine and carbamoyl phosphate: step 2/3. The sequence is that of Argininosuccinate synthase from Clostridium perfringens (strain ATCC 13124 / DSM 756 / JCM 1290 / NCIMB 6125 / NCTC 8237 / Type A).